The following is a 280-amino-acid chain: 4-diphosphocytidyl-2-C-methyl-D-erythritol kinase (280 aa).

K9 is an active-site residue. ATP is bound at residue 93–103 (PVAAGLGGGSS). D135 is an active-site residue.

This sequence belongs to the GHMP kinase family. IspE subfamily.

It carries out the reaction 4-CDP-2-C-methyl-D-erythritol + ATP = 4-CDP-2-C-methyl-D-erythritol 2-phosphate + ADP + H(+). It participates in isoprenoid biosynthesis; isopentenyl diphosphate biosynthesis via DXP pathway; isopentenyl diphosphate from 1-deoxy-D-xylulose 5-phosphate: step 3/6. Functionally, catalyzes the phosphorylation of the position 2 hydroxy group of 4-diphosphocytidyl-2C-methyl-D-erythritol. The protein is 4-diphosphocytidyl-2-C-methyl-D-erythritol kinase of Syntrophotalea carbinolica (strain DSM 2380 / NBRC 103641 / GraBd1) (Pelobacter carbinolicus).